We begin with the raw amino-acid sequence, 183 residues long: Alkyl hydroperoxide reductase AhpD (183 aa).

The active-site Proton donor is Cys-132. A disulfide bond links Cys-132 and Cys-135. The active-site Cysteine sulfenic acid (-SOH) intermediate is Cys-135.

It belongs to the AhpD family.

The enzyme catalyses N(6)-[(R)-dihydrolipoyl]-L-lysyl-[lipoyl-carrier protein] + a hydroperoxide = N(6)-[(R)-lipoyl]-L-lysyl-[lipoyl-carrier protein] + an alcohol + H2O. Its function is as follows. Antioxidant protein with alkyl hydroperoxidase activity. Required for the reduction of the AhpC active site cysteine residues and for the regeneration of the AhpC enzyme activity. The sequence is that of Alkyl hydroperoxide reductase AhpD from Caulobacter vibrioides (strain ATCC 19089 / CIP 103742 / CB 15) (Caulobacter crescentus).